Consider the following 89-residue polypeptide: Small ribosomal subunit protein uS15 (89 aa).

This sequence belongs to the universal ribosomal protein uS15 family. Part of the 30S ribosomal subunit. Forms a bridge to the 50S subunit in the 70S ribosome, contacting the 23S rRNA.

Its function is as follows. One of the primary rRNA binding proteins, it binds directly to 16S rRNA where it helps nucleate assembly of the platform of the 30S subunit by binding and bridging several RNA helices of the 16S rRNA. Forms an intersubunit bridge (bridge B4) with the 23S rRNA of the 50S subunit in the ribosome. The protein is Small ribosomal subunit protein uS15 of Azobacteroides pseudotrichonymphae genomovar. CFP2.